The sequence spans 98 residues: MSLVYMNIIMAFTTSLVGLLMYRSHLMSSLLCLEGMMLSLFIMATLIILNAHFTLASMMPIILLVFAACEAALGLSLLVMVSNTYGTDYVQSLNLLQC.

The next 3 membrane-spanning stretches (helical) occupy residues 1 to 21 (MSLV…GLLM), 29 to 49 (SLLC…LIIL), and 61 to 81 (IILL…LVMV).

The protein belongs to the complex I subunit 4L family. Core subunit of respiratory chain NADH dehydrogenase (Complex I) which is composed of 45 different subunits.

It localises to the mitochondrion inner membrane. It catalyses the reaction a ubiquinone + NADH + 5 H(+)(in) = a ubiquinol + NAD(+) + 4 H(+)(out). Core subunit of the mitochondrial membrane respiratory chain NADH dehydrogenase (Complex I) which catalyzes electron transfer from NADH through the respiratory chain, using ubiquinone as an electron acceptor. Part of the enzyme membrane arm which is embedded in the lipid bilayer and involved in proton translocation. In Hippopotamus amphibius (Hippopotamus), this protein is NADH-ubiquinone oxidoreductase chain 4L (MT-ND4L).